Consider the following 390-residue polypeptide: uncharacterized protein (390 aa).

Belongs to the peptidase M24 family.

This is an uncharacterized protein from Sinorhizobium fredii (strain NBRC 101917 / NGR234).